A 263-amino-acid chain; its full sequence is MLHAVTDSSASGPADGQAGAPKFRRVLLKVSGEALMGSQNYGIDIDTADRIAREVAAAVKGGTEMCLVIGGGNIFRGLSGAAKGMDRAAADYMGMLATVMNALAMQTALERIGVQTRVQSAIPMTTVCEPYIRRRATRHMEKGRVVIFAAGTGNPFFTTDTAAALRAAEMGCDALLKGTQVDGVYSDDPRTNPDAERFDQLDYLDVLTRDLRVMDASAVTLMRENAIPIVVFDIHKTNGLARVLAGEGKCTMIGKMKSDAAAV.

29-32 (KVSG) provides a ligand contact to ATP. Gly-71 serves as a coordination point for UMP. The ATP site is built by Gly-72 and Arg-76. Residues Asp-91 and 152–159 (TGNPFFTT) contribute to the UMP site. Positions 179, 180, 185, and 188 each coordinate ATP.

This sequence belongs to the UMP kinase family. As to quaternary structure, homohexamer.

Its subcellular location is the cytoplasm. The catalysed reaction is UMP + ATP = UDP + ADP. It functions in the pathway pyrimidine metabolism; CTP biosynthesis via de novo pathway; UDP from UMP (UMPK route): step 1/1. Inhibited by UTP. Its function is as follows. Catalyzes the reversible phosphorylation of UMP to UDP. The sequence is that of Uridylate kinase from Maricaulis maris (strain MCS10) (Caulobacter maris).